The sequence spans 357 residues: MGRVEDQIKDNYNSLSHEGERLNREAKIESEKLKNNAKLDAKDMKKDIDESVHSSWETVKEGAKTVQDYISSGIESVKHTITTEPAQKDMENLKHNVNHNLEEAEKEGSSVLNNISNFFKGSAEEAKSEAERIGYEAYKDGDQFVGDVHKNFKRTANETQKDANRLTSDVKNESNKIYKDIKDESNKLYNDVKGESSKIYNGAKKEGSKLATDLKKDTQYVADETKKMAADLKNKAADTYQDLSHDASKKATQLKKKASETLDESADAIEHQFDIMKKDFRHLNQRNGMIWGSIGLIGGATATSYLFPSASPMAKFTFIAGLASLGGYYGLHQPHNKIVDNAFHKANNKKEELKKKI.

The tract at residues 1-29 (MGRVEDQIKDNYNSLSHEGERLNREAKIE) is disordered. Positions 5–51 (EDQIKDNYNSLSHEGERLNREAKIESEKLKNNAKLDAKDMKKDIDES) form a coiled coil. The segment covering 17-29 (HEGERLNREAKIE) has biased composition (basic and acidic residues). N-linked (GlcNAc...) asparagine glycosylation is found at Asn-114, Asn-157, and Asn-172. Coiled coils occupy residues 150 to 177 (KNFKRTANETQKDANRLTSDVKNESNKI) and 223 to 270 (DETK…DAIE). The chain crosses the membrane as a helical span at residues 290 to 307 (IWGSIGLIGGATATSYLF).

Its subcellular location is the membrane. The polypeptide is SrfA-induced gene J protein (sigJ) (Dictyostelium discoideum (Social amoeba)).